Consider the following 400-residue polypeptide: Nicotinate phosphoribosyltransferase (400 aa).

A Phosphohistidine; by autocatalysis modification is found at H220.

It belongs to the NAPRTase family. Transiently phosphorylated on a His residue during the reaction cycle. Phosphorylation strongly increases the affinity for substrates and increases the rate of nicotinate D-ribonucleotide production. Dephosphorylation regenerates the low-affinity form of the enzyme, leading to product release.

The catalysed reaction is nicotinate + 5-phospho-alpha-D-ribose 1-diphosphate + ATP + H2O = nicotinate beta-D-ribonucleotide + ADP + phosphate + diphosphate. The protein operates within cofactor biosynthesis; NAD(+) biosynthesis; nicotinate D-ribonucleotide from nicotinate: step 1/1. Functionally, catalyzes the synthesis of beta-nicotinate D-ribonucleotide from nicotinate and 5-phospho-D-ribose 1-phosphate at the expense of ATP. This is Nicotinate phosphoribosyltransferase from Salmonella dublin (strain CT_02021853).